Here is a 153-residue protein sequence, read N- to C-terminus: Fucose mutarotase (153 aa).

H24 acts as the Proton donor in catalysis. D32 lines the substrate pocket. D69 is a catalytic residue. The substrate site is built by M79, Y120, Y138, and N140. Y120 is an active-site residue.

It belongs to the RbsD / FucU family. In terms of assembly, mainly homodimer, but also exists as homotetramer, homooctamer, and homodecamer. The homodimeric form seems catalytically inactive. As to expression, widely expressed in various tissues and cell lines, including kidney, liver, and pancreas, marginally in muscle and testis.

It catalyses the reaction alpha-L-fucose = beta-L-fucose. The protein operates within carbohydrate metabolism; L-fucose metabolism. In terms of biological role, involved in the interconversion between alpha- and beta-L-fucoses. L-Fucose (6-deoxy-L-galactose) exists as alpha-L-fucose (29.5%) and beta-L-fucose (70.5%), the beta-form is metabolized through the salvage pathway. GDP-L-fucose formed either by the de novo or salvage pathways is transported into the endoplasmic reticulum, where it serves as a substrate for N- and O-glycosylations by fucosyltransferases. Fucosylated structures expressed on cell surfaces or secreted in biological fluids are believed to play a critical role in cell-cell adhesion and recognition processes. In Mus musculus (Mouse), this protein is Fucose mutarotase (Fuom).